A 324-amino-acid chain; its full sequence is Elongation factor P--(R)-beta-lysine ligase (324 aa).

Residue Ser75–Glu77 coordinates substrate. ATP contacts are provided by residues Arg99–Gln101 and Asn108. A substrate-binding site is contributed by Tyr117. Glu243–Leu244 contacts ATP. Glu250 contributes to the substrate binding site. Position 299 (Gly299) interacts with ATP.

This sequence belongs to the class-II aminoacyl-tRNA synthetase family. EpmA subfamily. Homodimer.

The catalysed reaction is D-beta-lysine + L-lysyl-[protein] + ATP = N(6)-((3R)-3,6-diaminohexanoyl)-L-lysyl-[protein] + AMP + diphosphate + H(+). Its function is as follows. With EpmB is involved in the beta-lysylation step of the post-translational modification of translation elongation factor P (EF-P). Catalyzes the ATP-dependent activation of (R)-beta-lysine produced by EpmB, forming a lysyl-adenylate, from which the beta-lysyl moiety is then transferred to the epsilon-amino group of a conserved specific lysine residue in EF-P. The chain is Elongation factor P--(R)-beta-lysine ligase from Buchnera aphidicola subsp. Schizaphis graminum (strain Sg).